The sequence spans 431 residues: Glutamate--tRNA ligase 1 (431 aa).

Positions 6-16 (PSPTGDMHIGN) match the 'HIGH' region motif. The 'KMSKS' region motif lies at 235–239 (KMSKR). Residue lysine 238 coordinates ATP.

Belongs to the class-I aminoacyl-tRNA synthetase family. Glutamate--tRNA ligase type 1 subfamily. Monomer.

It localises to the cytoplasm. It carries out the reaction tRNA(Glu) + L-glutamate + ATP = L-glutamyl-tRNA(Glu) + AMP + diphosphate. Catalyzes the attachment of glutamate to tRNA(Glu) in a two-step reaction: glutamate is first activated by ATP to form Glu-AMP and then transferred to the acceptor end of tRNA(Glu). The protein is Glutamate--tRNA ligase 1 of Campylobacter jejuni (strain RM1221).